We begin with the raw amino-acid sequence, 109 residues long: Nucleoid-associated protein LJ_0424 (109 aa).

The protein belongs to the YbaB/EbfC family. Homodimer.

The protein resides in the cytoplasm. Its subcellular location is the nucleoid. Binds to DNA and alters its conformation. May be involved in regulation of gene expression, nucleoid organization and DNA protection. This chain is Nucleoid-associated protein LJ_0424, found in Lactobacillus johnsonii (strain CNCM I-12250 / La1 / NCC 533).